A 104-amino-acid polypeptide reads, in one-letter code: Large ribosomal subunit protein uL24 (104 aa).

It belongs to the universal ribosomal protein uL24 family. Part of the 50S ribosomal subunit.

Its function is as follows. One of two assembly initiator proteins, it binds directly to the 5'-end of the 23S rRNA, where it nucleates assembly of the 50S subunit. One of the proteins that surrounds the polypeptide exit tunnel on the outside of the subunit. This chain is Large ribosomal subunit protein uL24, found in Hydrogenovibrio crunogenus (strain DSM 25203 / XCL-2) (Thiomicrospira crunogena).